The chain runs to 317 residues: GTPase Era (317 aa).

The Era-type G domain occupies 23–190 (RSGFVALIGP…MDYLVETLPE (168 aa)). Residues 31–38 (GPTNAGKS) form a G1 region. GTP is bound at residue 31–38 (GPTNAGKS). The G2 stretch occupies residues 57 to 61 (QTTRA). Positions 78 to 81 (DTPG) are G3. Residues 78–82 (DTPGI) and 140–143 (NKID) contribute to the GTP site. A G4 region spans residues 140–143 (NKID). Positions 169–171 (ISA) are G5. The KH type-2 domain maps to 221 to 298 (LHQELPYASH…HLFLFVKVRE (78 aa)).

Belongs to the TRAFAC class TrmE-Era-EngA-EngB-Septin-like GTPase superfamily. Era GTPase family. As to quaternary structure, monomer.

The protein localises to the cytoplasm. The protein resides in the cell inner membrane. Functionally, an essential GTPase that binds both GDP and GTP, with rapid nucleotide exchange. Plays a role in 16S rRNA processing and 30S ribosomal subunit biogenesis and possibly also in cell cycle regulation and energy metabolism. The polypeptide is GTPase Era (Agrobacterium fabrum (strain C58 / ATCC 33970) (Agrobacterium tumefaciens (strain C58))).